A 302-amino-acid chain; its full sequence is Alpha-N-acetyl-neuraminyl-2,3-beta-galactosyl-1,3-N-acetyl-galactosaminide alpha-2,6-sialyltransferase (302 aa).

At 1-6 (MKAPGR) the chain is on the cytoplasmic side. Residues 7–27 (LVLIILCSVVFSAVYILLCCW) traverse the membrane as a helical; Signal-anchor for type II membrane protein segment. Residues 28-302 (AGLPLCLATC…VFAHPSWRTE (275 aa)) are Lumenal-facing. An intrachain disulfide couples cysteine 76 to cysteine 225. N-linked (GlcNAc...) asparagine glycosylation is present at asparagine 135.

This sequence belongs to the glycosyltransferase 29 family. Ubiquitous.

It localises to the golgi apparatus membrane. It catalyses the reaction an alpha-Neu5Ac-(2-&gt;3)-beta-D-Gal-(1-&gt;3)-D-GlcNAc derivative + CMP-N-acetyl-beta-neuraminate = an alpha-Neu5Ac-(2-&gt;3)-beta-D-Gal-(1-&gt;3)-[alpha-Neu5Ac-(2-&gt;6)]-D-GlcNAc derivative + CMP + H(+). The enzyme catalyses N-acetyl-alpha-neuraminosyl-(2-&gt;3)-beta-D-galactosyl-(1-&gt;3)-N-acetyl-D-galactosamine + CMP-N-acetyl-beta-neuraminate = N-acetyl-alpha-neuraminosyl-(2-&gt;3)-beta-D-galactosyl-(1-&gt;3)-[N-acetyl-alpha-neuraminosyl-(2-&gt;6)]-N-acetyl-D-galactosamine + CMP + H(+). The catalysed reaction is a ganglioside GM1b (d18:1(4E)) + CMP-N-acetyl-beta-neuraminate = a ganglioside GD1alpha (d18:1(4E)) + CMP + H(+). It carries out the reaction 3-O-[alpha-Neu5Ac-(2-&gt;3)-beta-D-Gal-(1-&gt;3)-alpha-D-GalNAc]-L-Ser-[protein] + CMP-N-acetyl-beta-neuraminate = a 3-O-{alpha-Neu5Ac-(2-&gt;3)-beta-D-Gal-(1-&gt;3)-[alpha-Neu5Ac-(2-&gt;6)]-alpha-D-GalNAc}-L-seryl-[protein] + CMP + H(+). It catalyses the reaction 3-O-[alpha-Neu5Ac-(2-&gt;3)-beta-D-Gal-(1-&gt;3)-alpha-D-GalNAc]-L-Thr-[protein] + CMP-N-acetyl-beta-neuraminate = a 3-O-{alpha-Neu5Ac-(2-&gt;3)-beta-D-Gal-(1-&gt;3)-[alpha-Neu5Ac-(2-&gt;6)]-alpha-D-GalNAc}-L-threonyl-[protein] + CMP + H(+). It functions in the pathway protein modification; protein glycosylation. It participates in glycolipid biosynthesis. Transfers the sialyl group (N-acetyl-alpha-neuraminyl or NeuAc) from CMP-NeuAc to the GalNAc residue on the NeuAc-alpha-2,3-Gal-beta-1,3-GalNAc sequence of glycoproteins and glycolipids forming an alpha-2,6-linkage. Produces branched type disialyl structures by transfer of a sialyl group onto a GalNAc residue inside the backbone core chains. Prefers O-glycans to glycoproteins or glycolipids. The sequence is that of Alpha-N-acetyl-neuraminyl-2,3-beta-galactosyl-1,3-N-acetyl-galactosaminide alpha-2,6-sialyltransferase (ST6GALNAC4) from Homo sapiens (Human).